The sequence spans 92 residues: RIIa domain-containing protein 1 (92 aa).

Residues 43-77 (KEVEWLISGFFREIFLKRPDNILEFAADYFTDPRL) enclose the RIIa domain.

In Homo sapiens (Human), this protein is RIIa domain-containing protein 1 (RIIAD1).